Reading from the N-terminus, the 409-residue chain is Serine hydroxymethyltransferase (409 aa).

(6S)-5,6,7,8-tetrahydrofolate contacts are provided by residues Leu116 and 120 to 122 (GHL). An N6-(pyridoxal phosphate)lysine modification is found at Lys225.

Belongs to the SHMT family. Homodimer. The cofactor is pyridoxal 5'-phosphate.

The protein resides in the cytoplasm. It carries out the reaction (6R)-5,10-methylene-5,6,7,8-tetrahydrofolate + glycine + H2O = (6S)-5,6,7,8-tetrahydrofolate + L-serine. The protein operates within one-carbon metabolism; tetrahydrofolate interconversion. Its pathway is amino-acid biosynthesis; glycine biosynthesis; glycine from L-serine: step 1/1. Its function is as follows. Catalyzes the reversible interconversion of serine and glycine with tetrahydrofolate (THF) serving as the one-carbon carrier. This reaction serves as the major source of one-carbon groups required for the biosynthesis of purines, thymidylate, methionine, and other important biomolecules. Also exhibits THF-independent aldolase activity toward beta-hydroxyamino acids, producing glycine and aldehydes, via a retro-aldol mechanism. This is Serine hydroxymethyltransferase from Acholeplasma laidlawii (strain PG-8A).